A 110-amino-acid chain; its full sequence is uncharacterized protein (110 aa).

It to M.jannaschii MJ1213 and A.aeolicus AA15.

This is an uncharacterized protein from Methanocaldococcus jannaschii (strain ATCC 43067 / DSM 2661 / JAL-1 / JCM 10045 / NBRC 100440) (Methanococcus jannaschii).